The primary structure comprises 1404 residues: DNA-directed RNA polymerase subunit beta' (1404 aa).

Zn(2+) contacts are provided by Cys-70, Cys-72, Cys-85, and Cys-88. 3 residues coordinate Mg(2+): Asp-460, Asp-462, and Asp-464. Zn(2+) is bound by residues Cys-814, Cys-888, Cys-895, and Cys-898.

Belongs to the RNA polymerase beta' chain family. In terms of assembly, the RNAP catalytic core consists of 2 alpha, 1 beta, 1 beta' and 1 omega subunit. When a sigma factor is associated with the core the holoenzyme is formed, which can initiate transcription. Mg(2+) serves as cofactor. It depends on Zn(2+) as a cofactor.

The enzyme catalyses RNA(n) + a ribonucleoside 5'-triphosphate = RNA(n+1) + diphosphate. In terms of biological role, DNA-dependent RNA polymerase catalyzes the transcription of DNA into RNA using the four ribonucleoside triphosphates as substrates. The chain is DNA-directed RNA polymerase subunit beta' from Shewanella pealeana (strain ATCC 700345 / ANG-SQ1).